The primary structure comprises 293 residues: Acetylglutamate kinase (293 aa).

Residues 70–71, Arg92, and Asn186 contribute to the substrate site; that span reads GG.

Belongs to the acetylglutamate kinase family. ArgB subfamily.

It localises to the cytoplasm. It catalyses the reaction N-acetyl-L-glutamate + ATP = N-acetyl-L-glutamyl 5-phosphate + ADP. Its pathway is amino-acid biosynthesis; L-arginine biosynthesis; N(2)-acetyl-L-ornithine from L-glutamate: step 2/4. In terms of biological role, catalyzes the ATP-dependent phosphorylation of N-acetyl-L-glutamate. In Synechococcus sp. (strain CC9605), this protein is Acetylglutamate kinase.